The sequence spans 344 residues: Phenylalanine--tRNA ligase alpha subunit (344 aa).

Glutamate 256 contacts Mg(2+).

The protein belongs to the class-II aminoacyl-tRNA synthetase family. Phe-tRNA synthetase alpha subunit type 1 subfamily. As to quaternary structure, tetramer of two alpha and two beta subunits. Mg(2+) serves as cofactor.

The protein localises to the cytoplasm. The enzyme catalyses tRNA(Phe) + L-phenylalanine + ATP = L-phenylalanyl-tRNA(Phe) + AMP + diphosphate + H(+). This is Phenylalanine--tRNA ligase alpha subunit from Bacillus licheniformis (strain ATCC 14580 / DSM 13 / JCM 2505 / CCUG 7422 / NBRC 12200 / NCIMB 9375 / NCTC 10341 / NRRL NRS-1264 / Gibson 46).